Here is a 180-residue protein sequence, read N- to C-terminus: Fetal and adult testis-expressed transcript protein homolog (180 aa).

Residues 77 to 108 (GPQLRGVGVVGEQGDGGAQPQENPGGSQGMRS) form a disordered region. The span at 84–93 (GVVGEQGDGG) shows a compositional bias: gly residues. The span at 96–107 (PQENPGGSQGMR) shows a compositional bias: polar residues. The chain crosses the membrane as a helical span at residues 160 to 178 (VLLFTMLLSSCITNLWLWM).

In terms of assembly, interacts with BIK and RNF183. Interacts with IMMT/MIC60and EMD.

It is found in the mitochondrion. Its subcellular location is the mitochondrion outer membrane. The protein localises to the endoplasmic reticulum membrane. In terms of biological role, involved in the regulation of endoplasmic reticulum (ER)-mitochondria coupling. Negatively regulates the ER-mitochondria distance and Ca(2+) transfer from ER to mitochondria possibly implicating it in the regulation of apoptosis. May collaborate with RNF183 to restrain BIK protein levels thus regulating apoptotic signaling. The chain is Fetal and adult testis-expressed transcript protein homolog (FATE1) from Bos taurus (Bovine).